We begin with the raw amino-acid sequence, 138 residues long: Small ribosomal subunit protein uS11 (138 aa).

The span at 1-12 (MPPKKANAAGPK) shows a compositional bias: low complexity. Positions 1 to 23 (MPPKKANAAGPKKGQKTRKREKK) are disordered. Residues 13–22 (KGQKTRKREK) are compositionally biased toward basic residues.

The protein belongs to the universal ribosomal protein uS11 family. Part of the 30S ribosomal subunit. Interacts with proteins S7 and S18. Binds to IF-3.

Functionally, located on the platform of the 30S subunit, it bridges several disparate RNA helices of the 16S rRNA. Forms part of the Shine-Dalgarno cleft in the 70S ribosome. In Mycobacterium leprae (strain Br4923), this protein is Small ribosomal subunit protein uS11.